Reading from the N-terminus, the 523-residue chain is 2,3-bisphosphoglycerate-independent phosphoglycerate mutase (523 aa).

Mn(2+) contacts are provided by Asp13 and Ser63. Ser63 functions as the Phosphoserine intermediate in the catalytic mechanism. Residues His124, 156-157 (RD), Arg188, Arg194, 268-271 (RSDR), and Lys341 each bind substrate. Mn(2+) contacts are provided by Asp408, His412, Asp449, His450, and His467.

Belongs to the BPG-independent phosphoglycerate mutase family. Monomer. Requires Mn(2+) as cofactor.

It carries out the reaction (2R)-2-phosphoglycerate = (2R)-3-phosphoglycerate. The protein operates within carbohydrate degradation; glycolysis; pyruvate from D-glyceraldehyde 3-phosphate: step 3/5. Functionally, catalyzes the interconversion of 2-phosphoglycerate and 3-phosphoglycerate. The polypeptide is 2,3-bisphosphoglycerate-independent phosphoglycerate mutase (Salinibacter ruber (strain DSM 13855 / M31)).